The sequence spans 186 residues: ATP synthase subunit delta (186 aa).

This sequence belongs to the ATPase delta chain family. In terms of assembly, F-type ATPases have 2 components, F(1) - the catalytic core - and F(0) - the membrane proton channel. F(1) has five subunits: alpha(3), beta(3), gamma(1), delta(1), epsilon(1). CF(0) has four main subunits: a(1), b(1), b'(1) and c(10-14). The alpha and beta chains form an alternating ring which encloses part of the gamma chain. F(1) is attached to F(0) by a central stalk formed by the gamma and epsilon chains, while a peripheral stalk is formed by the delta, b and b' chains.

Its subcellular location is the cell inner membrane. Its function is as follows. F(1)F(0) ATP synthase produces ATP from ADP in the presence of a proton or sodium gradient. F-type ATPases consist of two structural domains, F(1) containing the extramembraneous catalytic core and F(0) containing the membrane proton channel, linked together by a central stalk and a peripheral stalk. During catalysis, ATP synthesis in the catalytic domain of F(1) is coupled via a rotary mechanism of the central stalk subunits to proton translocation. This protein is part of the stalk that links CF(0) to CF(1). It either transmits conformational changes from CF(0) to CF(1) or is implicated in proton conduction. The polypeptide is ATP synthase subunit delta (Roseobacter denitrificans (strain ATCC 33942 / OCh 114) (Erythrobacter sp. (strain OCh 114))).